The chain runs to 202 residues: Glycerol-3-phosphate acyltransferase (202 aa).

6 helical membrane passes run methionine 2 to isoleucine 22, phenylalanine 54 to leucine 74, phenylalanine 85 to tyrosine 105, valine 120 to leucine 140, lysine 141 to serine 161, and leucine 162 to isoleucine 182.

It belongs to the PlsY family. In terms of assembly, probably interacts with PlsX.

The protein resides in the cell membrane. It carries out the reaction an acyl phosphate + sn-glycerol 3-phosphate = a 1-acyl-sn-glycero-3-phosphate + phosphate. Its pathway is lipid metabolism; phospholipid metabolism. Functionally, catalyzes the transfer of an acyl group from acyl-phosphate (acyl-PO(4)) to glycerol-3-phosphate (G3P) to form lysophosphatidic acid (LPA). This enzyme utilizes acyl-phosphate as fatty acyl donor, but not acyl-CoA or acyl-ACP. The sequence is that of Glycerol-3-phosphate acyltransferase from Staphylococcus aureus (strain USA300).